A 543-amino-acid polypeptide reads, in one-letter code: Hydroxylamine reductase (543 aa).

[4Fe-4S] cluster is bound by residues Cys5, Cys8, Cys17, and Cys23. Hybrid [4Fe-2O-2S] cluster-binding residues include His236, Glu260, Cys304, Cys398, Cys426, Cys451, Glu486, and Lys488. A Cysteine persulfide modification is found at Cys398.

The protein belongs to the HCP family. The cofactor is [4Fe-4S] cluster. It depends on hybrid [4Fe-2O-2S] cluster as a cofactor.

Its subcellular location is the cytoplasm. The catalysed reaction is A + NH4(+) + H2O = hydroxylamine + AH2 + H(+). In terms of biological role, catalyzes the reduction of hydroxylamine to form NH(3) and H(2)O. The polypeptide is Hydroxylamine reductase (Bacteroides fragilis (strain ATCC 25285 / DSM 2151 / CCUG 4856 / JCM 11019 / LMG 10263 / NCTC 9343 / Onslow / VPI 2553 / EN-2)).